A 311-amino-acid polypeptide reads, in one-letter code: Homoserine O-acetyltransferase (311 aa).

Catalysis depends on Cys142, which acts as the Acyl-thioester intermediate. Residues Lys163 and Ser192 each contribute to the substrate site. His235 (proton acceptor) is an active-site residue. Residue Glu237 is part of the active site. Arg249 is a binding site for substrate.

The protein belongs to the MetA family.

It is found in the cytoplasm. It carries out the reaction L-homoserine + acetyl-CoA = O-acetyl-L-homoserine + CoA. The protein operates within amino-acid biosynthesis; L-methionine biosynthesis via de novo pathway; O-acetyl-L-homoserine from L-homoserine: step 1/1. Transfers an acetyl group from acetyl-CoA to L-homoserine, forming acetyl-L-homoserine. This is Homoserine O-acetyltransferase from Lysinibacillus sphaericus (strain C3-41).